The following is a 337-amino-acid chain: Glyceraldehyde-3-phosphate dehydrogenase (337 aa).

Residues 12–13 (RI), aspartate 36, arginine 80, and serine 122 contribute to the NAD(+) site. D-glyceraldehyde 3-phosphate contacts are provided by residues 153–155 (SCT) and threonine 184. The Nucleophile role is filled by cysteine 154. Asparagine 185 lines the NAD(+) pocket. Residues arginine 199, 212 to 213 (TG), and arginine 235 contribute to the D-glyceraldehyde 3-phosphate site. Asparagine 318 is an NAD(+) binding site.

It belongs to the glyceraldehyde-3-phosphate dehydrogenase family. As to quaternary structure, homotetramer.

The protein resides in the cytoplasm. It carries out the reaction D-glyceraldehyde 3-phosphate + phosphate + NAD(+) = (2R)-3-phospho-glyceroyl phosphate + NADH + H(+). It functions in the pathway carbohydrate degradation; glycolysis; pyruvate from D-glyceraldehyde 3-phosphate: step 1/5. In terms of biological role, catalyzes the oxidative phosphorylation of glyceraldehyde 3-phosphate (G3P) to 1,3-bisphosphoglycerate (BPG) using the cofactor NAD. The first reaction step involves the formation of a hemiacetal intermediate between G3P and a cysteine residue, and this hemiacetal intermediate is then oxidized to a thioester, with concomitant reduction of NAD to NADH. The reduced NADH is then exchanged with the second NAD, and the thioester is attacked by a nucleophilic inorganic phosphate to produce BPG. This chain is Glyceraldehyde-3-phosphate dehydrogenase (gap), found in Zymomonas mobilis subsp. mobilis (strain ATCC 31821 / ZM4 / CP4).